Here is a 266-residue protein sequence, read N- to C-terminus: 3-methyl-2-oxobutanoate hydroxymethyltransferase (266 aa).

Residues aspartate 45 and aspartate 84 each contribute to the Mg(2+) site. Residues aspartate 45 to serine 46, aspartate 84, and lysine 112 contribute to the 3-methyl-2-oxobutanoate site. Glutamate 114 serves as a coordination point for Mg(2+). Glutamate 181 (proton acceptor) is an active-site residue.

Belongs to the PanB family. Homodecamer; pentamer of dimers. Mg(2+) serves as cofactor.

It is found in the cytoplasm. It catalyses the reaction 3-methyl-2-oxobutanoate + (6R)-5,10-methylene-5,6,7,8-tetrahydrofolate + H2O = 2-dehydropantoate + (6S)-5,6,7,8-tetrahydrofolate. It participates in cofactor biosynthesis; (R)-pantothenate biosynthesis; (R)-pantoate from 3-methyl-2-oxobutanoate: step 1/2. Functionally, catalyzes the reversible reaction in which hydroxymethyl group from 5,10-methylenetetrahydrofolate is transferred onto alpha-ketoisovalerate to form ketopantoate. This chain is 3-methyl-2-oxobutanoate hydroxymethyltransferase, found in Pseudomonas savastanoi pv. phaseolicola (strain 1448A / Race 6) (Pseudomonas syringae pv. phaseolicola (strain 1448A / Race 6)).